Reading from the N-terminus, the 452-residue chain is UPF0210 protein Hore_14430 (452 aa).

Belongs to the UPF0210 family. As to quaternary structure, homodimer.

This is UPF0210 protein Hore_14430 from Halothermothrix orenii (strain H 168 / OCM 544 / DSM 9562).